Consider the following 378-residue polypeptide: Probable E3 ubiquitin-protein ligase LUL3 (378 aa).

The segment covering 1–21 has biased composition (basic residues); the sequence is MGISLSKRRRDNNNNHHHPHH. Residues 1-79 form a disordered region; that stretch reads MGISLSKRRR…PPSQISYRPY (79 aa). A lipid anchor (N-myristoyl glycine) is attached at G2. 2 stretches are compositionally biased toward pro residues: residues 29 to 38 and 55 to 72; these read DPPPQQPPPQ and SLPP…PPPS. Residues 164–283 form a DAR2 domain region; that stretch reads FVFDALFDGS…GSFKVKVMKQ (120 aa). Residues 321-360 form an RING-type; atypical zinc finger; that stretch reads CVICLTEPKDTAVMPCRHLCLCSDCAEELRFQTNKCPICR.

Belongs to the RING-type zinc finger family. LOG2 subfamily. Myristoylated (in vitro).

The enzyme catalyses S-ubiquitinyl-[E2 ubiquitin-conjugating enzyme]-L-cysteine + [acceptor protein]-L-lysine = [E2 ubiquitin-conjugating enzyme]-L-cysteine + N(6)-ubiquitinyl-[acceptor protein]-L-lysine.. It functions in the pathway protein modification; protein ubiquitination. Functionally, acts as an E3 ubiquitin-protein ligase, or as part of E3 complex, which accepts ubiquitin from specific E2 ubiquitin-conjugating enzymes and then transfers it to substrates (in vitro). The chain is Probable E3 ubiquitin-protein ligase LUL3 (LUL3) from Arabidopsis thaliana (Mouse-ear cress).